A 937-amino-acid polypeptide reads, in one-letter code: ABC transporter A family member 4 (937 aa).

7 helical membrane-spanning segments follow: residues 34 to 54 (LIVIPFYLCVLLVGIQVLFDT), 340 to 360 (IASVIGPIFLTWVIVLLFPVI), 394 to 414 (FLAISTLYIICLMIFGSAIGL), 423 to 443 (SIQFIFYFLCINLQISIAFLV), 455 to 475 (VAAYLYVFGSGLLGGFLFQFM), 478 to 498 (GLSFPRGWIFVMELYPGFSLY), and 528 to 548 (AMDEVFYIIIIEWFLALIAAY). Residues 618 to 852 (DKLKKVYPGR…YGGSYVLTMT (235 aa)) enclose the ABC transporter domain. 653–660 (GPNGAGKT) provides a ligand contact to ATP.

It belongs to the ABC transporter superfamily. ABCA family. CPR flippase (TC 3.A.1.211) subfamily.

It is found in the membrane. In Arabidopsis thaliana (Mouse-ear cress), this protein is ABC transporter A family member 4 (ABCA4).